The following is a 110-amino-acid chain: DNA-binding protein PAE3044 (110 aa).

The protein belongs to the PDCD5 family.

This chain is DNA-binding protein PAE3044, found in Pyrobaculum aerophilum (strain ATCC 51768 / DSM 7523 / JCM 9630 / CIP 104966 / NBRC 100827 / IM2).